A 101-amino-acid chain; its full sequence is Chaperone modulatory protein CbpM (101 aa).

The protein belongs to the CbpM family.

Its function is as follows. Interacts with CbpA and inhibits both the DnaJ-like co-chaperone activity and the DNA binding activity of CbpA. Together with CbpA, modulates the activity of the DnaK chaperone system. Does not inhibit the co-chaperone activity of DnaJ. The sequence is that of Chaperone modulatory protein CbpM from Citrobacter koseri (strain ATCC BAA-895 / CDC 4225-83 / SGSC4696).